The chain runs to 465 residues: Cysteine--tRNA ligase 2 (465 aa).

Cysteine 30 lines the Zn(2+) pocket. The short motif at 32–42 is the 'HIGH' region element; the sequence is ITVYDYCHVGH. 3 residues coordinate Zn(2+): cysteine 214, histidine 239, and glutamate 243. The short motif at 271–275 is the 'KMSKS' region element; it reads KMSKS. ATP is bound at residue lysine 274.

The protein belongs to the class-I aminoacyl-tRNA synthetase family. As to quaternary structure, monomer. Requires Zn(2+) as cofactor.

It is found in the cytoplasm. It carries out the reaction tRNA(Cys) + L-cysteine + ATP = L-cysteinyl-tRNA(Cys) + AMP + diphosphate. This chain is Cysteine--tRNA ligase 2, found in Burkholderia lata (strain ATCC 17760 / DSM 23089 / LMG 22485 / NCIMB 9086 / R18194 / 383).